Consider the following 248-residue polypeptide: Pyridoxine 5'-phosphate synthase (248 aa).

Position 12 (asparagine 12) interacts with 3-amino-2-oxopropyl phosphate. Aspartate 14 to histidine 15 serves as a coordination point for 1-deoxy-D-xylulose 5-phosphate. Arginine 23 is a 3-amino-2-oxopropyl phosphate binding site. Histidine 48 (proton acceptor) is an active-site residue. 1-deoxy-D-xylulose 5-phosphate is bound by residues arginine 50 and histidine 55. Catalysis depends on glutamate 75, which acts as the Proton acceptor. Threonine 105 lines the 1-deoxy-D-xylulose 5-phosphate pocket. Histidine 196 serves as the catalytic Proton donor. 3-amino-2-oxopropyl phosphate-binding positions include glycine 197 and glycine 218–histidine 219.

This sequence belongs to the PNP synthase family. In terms of assembly, homooctamer; tetramer of dimers.

It localises to the cytoplasm. The catalysed reaction is 3-amino-2-oxopropyl phosphate + 1-deoxy-D-xylulose 5-phosphate = pyridoxine 5'-phosphate + phosphate + 2 H2O + H(+). It participates in cofactor biosynthesis; pyridoxine 5'-phosphate biosynthesis; pyridoxine 5'-phosphate from D-erythrose 4-phosphate: step 5/5. Functionally, catalyzes the complicated ring closure reaction between the two acyclic compounds 1-deoxy-D-xylulose-5-phosphate (DXP) and 3-amino-2-oxopropyl phosphate (1-amino-acetone-3-phosphate or AAP) to form pyridoxine 5'-phosphate (PNP) and inorganic phosphate. In Stutzerimonas stutzeri (strain A1501) (Pseudomonas stutzeri), this protein is Pyridoxine 5'-phosphate synthase.